The sequence spans 114 residues: Prostate stem cell antigen (114 aa).

The N-terminal stretch at 1-11 (MAGLALQPGTA) is a signal peptide. Residues 12–86 (LLCYSCKAQV…CCDTDLCNAS (75 aa)) form the UPAR/Ly6 domain. 5 disulfide bridges follow: cysteine 14/cysteine 39, cysteine 17/cysteine 26, cysteine 32/cysteine 57, cysteine 61/cysteine 77, and cysteine 78/cysteine 83. The N-linked (GlcNAc...) asparagine glycan is linked to asparagine 31. Serine 86 carries GPI-anchor amidated serine lipidation. The propeptide at 86–114 (SGAHALQPAAAILALLPALGLLLWGPGQL) is removed in mature form.

As to quaternary structure, interacts with CHRNA4. Post-translationally, N-glycosylated. In terms of tissue distribution, highly expressed in prostate (basal, secretory and neuroendocrine epithelium cells). Also found in bladder (transitional epithelium), placenta (trophoblasts), stomach (neuroendocrine cells), colon (neuroendocrine cells) and kidney (collecting ducts). Overexpressed in prostate cancers and expression is correlated with tumor stage, grade and androgen-independence. Highly expressed in prostate cancer bone metastases. Expressed in gastric epithelial cells, mainly in the isthmus (at protein level). Not detected in normal intestinal epithelium (at protein level). Expressed in brain cortex; expression is significantly increased in the front cortex of Alzheimer disease patients.

The protein localises to the cell membrane. Its function is as follows. May be involved in the regulation of cell proliferation. Has a cell-proliferation inhibition activity in vitro. Functionally, may act as a modulator of nicotinic acetylcholine receptors (nAChRs) activity. In vitro inhibits nicotine-induced signaling probably implicating alpha-3:beta-2- or alpha-7-containing nAChRs. The sequence is that of Prostate stem cell antigen (PSCA) from Homo sapiens (Human).